The following is a 615-amino-acid chain: Probable transporter mch1 (615 aa).

A disordered region spans residues 1–35 (MTGSIGQAPAIDKRDFDINRRSSTPHETAAQEDEA). Residues 11-20 (IDKRDFDINR) are compositionally biased toward basic and acidic residues. A helical membrane pass occupies residues 84–104 (FVWGVITCLGAGSITAFSLYG). The N-linked (GlcNAc...) asparagine glycan is linked to Asn-112. A run of 5 helical transmembrane segments spans residues 120 to 140 (EVSI…GYLC), 147 to 167 (PLTL…AFVY), 182 to 202 (FWVM…MYLA), 218 to 238 (GIIL…QSQV), and 261 to 281 (FLFL…ALRI). Asn-329 carries N-linked (GlcNAc...) asparagine glycosylation. Helical transmembrane passes span 371-391 (IFLA…VTGP), 428-448 (IIAL…DLFA), 477-497 (LAFL…LASP), 512-532 (LVGL…SVVW), 538-558 (GTNW…WGVI), and 583-603 (FGFW…AWLV).

The protein belongs to the major facilitator superfamily.

It localises to the vacuole membrane. Probable transporter. The sequence is that of Probable transporter mch1 (mch1) from Emericella nidulans (strain FGSC A4 / ATCC 38163 / CBS 112.46 / NRRL 194 / M139) (Aspergillus nidulans).